Consider the following 706-residue polypeptide: Lethal(3)malignant brain tumor-like protein 2 (706 aa).

The segment at 1 to 85 (MEKPRGVEET…GTPRSLDGSG (85 aa)) is disordered. Ser-13 carries the phosphoserine modification. The span at 15–26 (PMEEEEEDDDLE) shows a compositional bias: acidic residues. Residues 39–50 (SSAGSESSSYLE) are compositionally biased toward low complexity. Positions 54–63 (EAEHEDREAG) are enriched in basic and acidic residues. The residue at position 68 (Ser-68) is a Phosphoserine. Thr-77 is subject to Phosphothreonine. Residues 82–117 (DGSGSEPAVCEMCGIVGTREAFFSKTKRFCSVSCSR) form an FCS-type zinc finger. Residues Cys-91, Cys-94, Cys-111, and Cys-115 each contribute to the Zn(2+) site. MBT repeat units lie at residues 180–284 (FDWG…LVPP), 292–392 (TDWK…IKLS), 398–501 (MAHH…LTPP), and 509–605 (FSWE…LQPP). At Ser-339 the chain carries Phosphoserine. Lys-406 participates in a covalent cross-link: Glycyl lysine isopeptide (Lys-Gly) (interchain with G-Cter in SUMO2). The segment at 606-669 (VATEPTTPLK…KAPSEPAPDE (64 aa)) is disordered. Positions 620 to 635 (TKKKKKQFGKKRKRIP) are enriched in basic residues. Residues Lys-648, Lys-660, and Lys-676 each participate in a glycyl lysine isopeptide (Lys-Gly) (interchain with G-Cter in SUMO2) cross-link. The interval 685 to 706 (ADKALSPELPVPVENIKQETDD) is disordered. Phosphoserine is present on Ser-690. Lys-701 participates in a covalent cross-link: Glycyl lysine isopeptide (Lys-Gly) (interchain with G-Cter in SUMO1); alternate. Lys-701 is covalently cross-linked (Glycyl lysine isopeptide (Lys-Gly) (interchain with G-Cter in SUMO2); alternate).

As to quaternary structure, part of the E2F6.com-1 complex in G0 phase composed of E2F6, MGA, MAX, TFDP1, CBX3, BAT8, EUHMTASE1, RING1, RNF2, MBLR, BAT8 and YAF2.

It is found in the nucleus. In terms of biological role, putative Polycomb group (PcG) protein. PcG proteins maintain the transcriptionally repressive state of genes, probably via a modification of chromatin, rendering it heritably changed in its expressibility. Its association with a chromatin-remodeling complex suggests that it may contribute to prevent expression of genes that trigger the cell into mitosis. Binds to monomethylated and dimethylated 'Lys-20' on histone H4. Binds histone H3 peptides that are monomethylated or dimethylated on 'Lys-4', 'Lys-9' or 'Lys-27'. The protein is Lethal(3)malignant brain tumor-like protein 2 (L3MBTL2) of Bos taurus (Bovine).